Here is a 177-residue protein sequence, read N- to C-terminus: Glutathione peroxidase homolog (177 aa).

The active site involves Cys35.

It belongs to the glutathione peroxidase family.

Functionally, important in the cellular metabolism or defense processes particular to this pathogen. This is Glutathione peroxidase homolog (gpxA) from Neisseria meningitidis serogroup A / serotype 4A (strain DSM 15465 / Z2491).